Reading from the N-terminus, the 297-residue chain is Beta-1,3-galactosyltransferase 5 (297 aa).

Topologically, residues 1-7 (MAFPKMR) are cytoplasmic. A helical; Signal-anchor for type II membrane protein transmembrane segment spans residues 8-28 (LMYVCLLVLGALCVYFSMYSL). At 29-297 (NLFKEQSFVY…KPRTLLDYWQ (269 aa)) the chain is on the lumenal side. Asn130, Asn174, and Asn231 each carry an N-linked (GlcNAc...) asparagine glycan.

This sequence belongs to the glycosyltransferase 31 family.

It is found in the golgi apparatus membrane. It catalyses the reaction a globoside Gb4Cer (d18:1(4E)) + UDP-alpha-D-galactose = a globoside GalGb4Cer (d18:1(4E)) + UDP + H(+). It functions in the pathway protein modification; protein glycosylation. Functionally, catalyzes the transfer of Gal to GlcNAc-based acceptors with a preference for the core3 O-linked glycan GlcNAc(beta1,3)GalNAc structure. Can use glycolipid LC3Cer as an efficient acceptor. The polypeptide is Beta-1,3-galactosyltransferase 5 (B3GALT5) (Pan troglodytes (Chimpanzee)).